A 1105-amino-acid chain; its full sequence is Ran-binding protein 6 (1105 aa).

Ala-2 bears the N-acetylalanine mark. HEAT repeat units lie at residues 219 to 257, 361 to 399, 402 to 440, and 444 to 483; these read FKDF…TVPK, KVVL…GCHQ, ESIL…DFAP, and KKFH…DCPK. The interval 333–383 is ran-GTP binding; that stretch reads DEMEEDDFDSNAVAAESALDRLACGLGGKVVLPMTKEHIMQMLQSPDWKYR. Positions 806–842 form a coiled coil; sequence KAKLEGHFKNQELRQVKRQEENYDQQVEMSLQDEDEC. HEAT repeat units follow at residues 866-905, 908-946, and 949-987; these read LPWF…HCSP, FKYV…FGGD, and RSLC…IGKI.

This sequence belongs to the importin beta family.

The protein localises to the cytoplasm. It is found in the nucleus. Its function is as follows. May function in nuclear protein import as nuclear transport receptor. The polypeptide is Ran-binding protein 6 (RANBP6) (Homo sapiens (Human)).